Reading from the N-terminus, the 252-residue chain is Ribosomal RNA small subunit methyltransferase A (252 aa).

N10, L12, G36, E57, D81, and N98 together coordinate S-adenosyl-L-methionine.

The protein belongs to the class I-like SAM-binding methyltransferase superfamily. rRNA adenine N(6)-methyltransferase family. RsmA subfamily.

The protein resides in the cytoplasm. It carries out the reaction adenosine(1518)/adenosine(1519) in 16S rRNA + 4 S-adenosyl-L-methionine = N(6)-dimethyladenosine(1518)/N(6)-dimethyladenosine(1519) in 16S rRNA + 4 S-adenosyl-L-homocysteine + 4 H(+). Functionally, specifically dimethylates two adjacent adenosines (A1518 and A1519) in the loop of a conserved hairpin near the 3'-end of 16S rRNA in the 30S particle. May play a critical role in biogenesis of 30S subunits. This is Ribosomal RNA small subunit methyltransferase A from Mycoplasmopsis pulmonis (strain UAB CTIP) (Mycoplasma pulmonis).